Consider the following 153-residue polypeptide: UPF0235 protein C15orf40 (153 aa).

Over residues 1–12 the composition is skewed to basic residues; sequence MLRLRSGLRHLR. Positions 1 to 55 are disordered; the sequence is MLRLRSGLRHLRATPNTRGSARLLCAEMPKKAGATTKGKSQSKEPERPLPPLGPV. Residue serine 116 is modified to Phosphoserine.

The protein belongs to the UPF0235 family.

The sequence is that of UPF0235 protein C15orf40 (C15orf40) from Homo sapiens (Human).